A 371-amino-acid polypeptide reads, in one-letter code: Probable trehalose-phosphate phosphatase 1 (371 aa).

The protein belongs to the trehalose phosphatase family. Requires a divalent metal cation as cofactor. As to expression, expressed in roots and shoots.

It carries out the reaction alpha,alpha-trehalose 6-phosphate + H2O = alpha,alpha-trehalose + phosphate. It participates in glycan biosynthesis; trehalose biosynthesis. Removes the phosphate from trehalose 6-phosphate to produce free trehalose. Trehalose accumulation in plant improves abiotic stress tolerance. This is Probable trehalose-phosphate phosphatase 1 (TPP1) from Oryza sativa subsp. japonica (Rice).